We begin with the raw amino-acid sequence, 410 residues long: Gamma-glutamyl phosphate reductase (410 aa).

This sequence belongs to the gamma-glutamyl phosphate reductase family.

The protein localises to the cytoplasm. It carries out the reaction L-glutamate 5-semialdehyde + phosphate + NADP(+) = L-glutamyl 5-phosphate + NADPH + H(+). Its pathway is amino-acid biosynthesis; L-proline biosynthesis; L-glutamate 5-semialdehyde from L-glutamate: step 2/2. Functionally, catalyzes the NADPH-dependent reduction of L-glutamate 5-phosphate into L-glutamate 5-semialdehyde and phosphate. The product spontaneously undergoes cyclization to form 1-pyrroline-5-carboxylate. The chain is Gamma-glutamyl phosphate reductase from Sulfurovum sp. (strain NBC37-1).